The chain runs to 108 residues: Curli assembly protein CsgC (108 aa).

The N-terminal stretch at M1–A8 is a signal peptide.

This sequence belongs to the CsgC/AgfC family.

It is found in the periplasm. Functionally, plays a role in the extracellular assembly of CsgA into thin aggregative fimbriae (Tafi) fibers. Assembly may also require CsgE. Tafi are thought to be assembled via an extracellular nucleation-precipitation (ENP) pathway, and possibly also via an intracellular non-CsgC-dependent pathway. In Salmonella arizonae (strain ATCC BAA-731 / CDC346-86 / RSK2980), this protein is Curli assembly protein CsgC.